We begin with the raw amino-acid sequence, 533 residues long: Undecaprenyl phosphate-alpha-4-amino-4-deoxy-L-arabinose arabinosyl transferase (533 aa).

A run of 13 helical transmembrane segments spans residues 10–30 (LLLA…GLWI), 64–84 (PAGY…LFGV), 86–106 (IASA…AGKI), 113–133 (SFAS…AGYS), 137–157 (PQFT…VHSI), 170–190 (VACG…PAII), 207–227 (FGPL…LAVH), 257–277 (WWFY…LLPV), 290–310 (DTAF…LSKG), 312–332 (LPTY…DALV), 345–365 (VNGI…IYVQ), 377–397 (HLLL…LQGI), and 402–422 (FWAL…AALP).

The protein belongs to the glycosyltransferase 83 family.

The protein resides in the cell inner membrane. It carries out the reaction 4-amino-4-deoxy-alpha-L-arabinopyranosyl di-trans,octa-cis-undecaprenyl phosphate + lipid IVA = lipid IIA + di-trans,octa-cis-undecaprenyl phosphate.. It functions in the pathway lipopolysaccharide metabolism; 4-amino-4-deoxy-beta-L-arabinose-lipid A biosynthesis. Its function is as follows. Catalyzes the transfer of the L-Ara4N moiety of the glycolipid undecaprenyl phosphate-alpha-L-Ara4N to lipid A. The modified arabinose is attached to lipid A and is required for resistance to polymyxin and cationic antimicrobial peptides. This Pseudomonas savastanoi pv. phaseolicola (strain 1448A / Race 6) (Pseudomonas syringae pv. phaseolicola (strain 1448A / Race 6)) protein is Undecaprenyl phosphate-alpha-4-amino-4-deoxy-L-arabinose arabinosyl transferase.